Here is a 1638-residue protein sequence, read N- to C-terminus: MASPSPANSPMPPPQAPSPMAPPSQSPAPSPHSPYPHQQPGPLQGPPPPGHPGAYGHPMQHGPPGQGPPGHHMPPHHQGMIFSKGPHMGMQMPPTGPNMSPYQTHGMPPNAPTQPCIVSPGGPPGGPPPPERSSQENLHALQRAIDSMEEKGLQEDPRYSQLLAMRATSKHQHLNGNQVNLLRTQITAYRLLARNKPISMQMQQALQAAQQQPPPGPPIGPPGAPGGPPPGSQHAGQPPVPPQQQQQPPPSAGTPPQCSTPPASNPYGPPVPGQKMQVAPPPPHMQQGQPLPPQPPQVGGPPPIQQQQPPQQQQQQSQPPPPEPHQHQLPNGGKPLSMGPSGGQPLIPSSPMQPQVRGTLPGMPPGSQVPQPGGGPQRQVPPAGMPMPKPNRITTVAKPVGLDPITLLQERENRIAARISLRMQELQRLPATMSEDLRLQAAIELRALRVLNFQRQLRMEFVQCTRRDTTLETALNIKLYKRTKRQGLREARATEKLEKQQKLEAERKRRQKHLEFLAAVLQHGKDLREFHRNNKAQLARMNKAVMNHHANAEREQKKEQERIEKERMRRLMAEDEEGYRKLIDQKKDKRLAFLLSQTDEYISNLTQMVKQHKDDQMKKKEEEGKRLIQFKKELLMSGEYIGIDEGSIVADMRVHVVEQCTGKKLTGDDAPMLKHLHRWLNMHPGWDWIDDEEDSCGSNDDHKPKVEEQPTATEDATDKAQATGNDEDAKDLITKAKVEDDEYRTEEQTYYSIAHTIHEKVVEQASIMVNGTLKEYQIKGLEWLVSLYNNNLNGILADEMGLGKTIQTISLVTYLMDRKKVMGPYLIIVPLSTLPNWVLEFEKWAPAVGVVSYKGSPQGRRLLQNQMRATKFNVLLTTYEYVIKDKAVLAKIQWKYMIIDEGHRMKNHHCKLTQVLNTHYIAPYRLLLTGTPLQNKLPELWALLNFLLPSIFKSCSTFEQWFNAPFATTGEKVELNEEETILIIRRLHKVLRPFLLRRLKKEVEHQLPDKVEYIIKCDMSALQRVLYKHMQSKGVLLTDGSEKGKHGKGGAKALMNTIVQLRKLCNHPFMFQHIEEKYCDHTGGHGVVSGPDLYRVSGKFELLDRILPKLKATNHRVLLFCQMTQCMTIIEDYLGWRQFGYLRLDGTTKAEDRGELLRKFNAKGSDVFVFLLSTRAGGLGLNLQTADTVVIFDSDWNPHQDLQAQDRAHRIGQRNEVRVLRLMTVNSVEERILAAARYKLNMDEKVIQAGMFDQKSTGSERQQFLQTILHQDDNEEEEENEVPDDEMINMMIARSEEEIEIFKRMDAERKKEDEEIHPGRERLIDESELPDWLTKDDDEVERFHYQYDEDTILGRGSRQRKEVDYTDSLTEKEWLKAIDDGAEFDEEEEEDDSKRKRRKRKNRKEESDDDSLILKRRRRQNLDKRSKKQMHKIMSAVIKHNQDGRTLSEPFMKLPSRQRLPDYYEIIKRPVDIKKILQRIEDCKYADLNELEKDFMQLCQNAQIYNEEASLIYLDSIALQKVFVGARQRITAAADAAAVAAGDNTGEAHGNGGSDNSDNDDDDGGDDGSDDEEIATTSAAAVKMKLKLNKSLASAPATPTQSSSNVSSGAATTSKKQTRRKRSQKKYTISDDDDDDMD.

Disordered regions lie at residues 1 to 137 (MASP…SQEN) and 201 to 387 (QMQQ…GMPM). The span at 7-51 (ANSPMPPPQAPSPMAPPSQSPAPSPHSPYPHQQPGPLQGPPPPGH) shows a compositional bias: pro residues. Residues 52 to 63 (PGAYGHPMQHGP) are compositionally biased toward low complexity. The segment covering 121–131 (GGPPGGPPPPE) has biased composition (pro residues). The QLQ domain maps to 173–208 (HLNGNQVNLLRTQITAYRLLARNKPISMQMQQALQA). Over residues 201–211 (QMQQALQAAQQ) the composition is skewed to low complexity. 4 stretches are compositionally biased toward pro residues: residues 212–231 (QPPP…PPPG), 238–253 (PPVP…PSAG), 263–272 (ASNPYGPPVP), and 279–304 (APPP…PPPI). Low complexity-rich tracts occupy residues 305 to 317 (QQQQ…QQQS) and 365 to 382 (PGSQ…QVPP). In terms of domain architecture, HSA spans 501 to 573 (QKLEAERKRR…EKERMRRLMA (73 aa)). The segment at 691–730 (DEEDSCGSNDDHKPKVEEQPTATEDATDKAQATGNDEDAK) is disordered. Serine 695 and serine 698 each carry phosphoserine. Residues 699–708 (NDDHKPKVEE) are compositionally biased toward basic and acidic residues. Over residues 710–724 (PTATEDATDKAQATG) the composition is skewed to polar residues. A Helicase ATP-binding domain is found at 785-950 (VSLYNNNLNG…WALLNFLLPS (166 aa)). 798 to 805 (DEMGLGKT) lines the ATP pocket. Positions 900-903 (DEGH) match the DEGH box motif. Positions 1102-1263 (LLDRILPKLK…QKSTGSERQQ (162 aa)) constitute a Helicase C-terminal domain. A compositionally biased stretch (acidic residues) spans 1380 to 1391 (DGAEFDEEEEED). Residues 1380-1412 (DGAEFDEEEEEDDSKRKRRKRKNRKEESDDDSL) are disordered. Phosphoserine occurs at positions 1407 and 1411. Residues 1425–1530 (RSKKQMHKIM…KVFVGARQRI (106 aa)) enclose the Bromo domain. Positions 1544–1578 (NTGEAHGNGGSDNSDNDDDDGGDDGSDDEEIATTS) are disordered. Acidic residues predominate over residues 1557–1574 (SDNDDDDGGDDGSDDEEI). A phosphoserine mark is found at serine 1591 and serine 1594. Over residues 1592–1604 (LASAPATPTQSSS) the composition is skewed to low complexity. A disordered region spans residues 1592 to 1638 (LASAPATPTQSSSNVSSGAATTSKKQTRRKRSQKKYTISDDDDDDMD). The span at 1616–1625 (KQTRRKRSQK) shows a compositional bias: basic residues.

Component of the Brahma complex, which is composed of brm, osa, mor, Snr1/Bap45, dalao/Bap111, Bap55, Bap60 and Act42A/Bap47. Interacts with asf1. Associates with the brm-HDAC3-erm repressor complex, composed of brm, HDAC3 and erm. Interacts with erm and HDAC3.

It localises to the nucleus. It catalyses the reaction ATP + H2O = ADP + phosphate + H(+). In terms of biological role, transcriptional regulator. Acts as a coactivator, assisting one or more dedicated transcriptional activators of ANTC and BXC homeotic gene clusters. Can counteract the repressive effect of Polycomb protein. ATPase subunit of the Brahma complex, a multiprotein complex which is the equivalent of the yeast SWI/SNF complex and acts by remodeling the chromatin by catalyzing an ATP-dependent alteration in the structure of nucleosomal DNA. This complex can both serve as a transcriptional coactivator or corepressor, depending on the context. In type II neuroblast lineage, as part of the Brm remodeling complex, suppresses the formation of ectopic neuroblasts probably through interaction with erm and HDAC3. The chain is ATP-dependent helicase brm (brm) from Drosophila melanogaster (Fruit fly).